We begin with the raw amino-acid sequence, 129 residues long: Small ribosomal subunit protein uS11 (129 aa).

Belongs to the universal ribosomal protein uS11 family. In terms of assembly, part of the 30S ribosomal subunit. Interacts with proteins S7 and S18. Binds to IF-3.

In terms of biological role, located on the platform of the 30S subunit, it bridges several disparate RNA helices of the 16S rRNA. Forms part of the Shine-Dalgarno cleft in the 70S ribosome. The polypeptide is Small ribosomal subunit protein uS11 (Tolumonas auensis (strain DSM 9187 / NBRC 110442 / TA 4)).